The primary structure comprises 511 residues: Alpha-amylase 1A (511 aa).

Positions 1-15 (MKLFWLLFTIGFCWA) are cleaved as a signal peptide. The residue at position 16 (glutamine 16) is a Pyrrolidone carboxylic acid. Disulfide bonds link cysteine 43–cysteine 101, cysteine 85–cysteine 130, and cysteine 156–cysteine 175. Residues asparagine 115, arginine 173, and aspartate 182 each coordinate Ca(2+). Chloride is bound at residue arginine 210. Aspartate 212 functions as the Nucleophile in the catalytic mechanism. Histidine 216 is a binding site for Ca(2+). Glutamate 248 (proton donor) is an active-site residue. Asparagine 313 and arginine 352 together coordinate chloride. Residue asparagine 365 is modified to Deamidated asparagine; partial. Residues cysteine 393 and cysteine 399 are joined by a disulfide bond. Asparagine 427 is subject to Deamidated asparagine; partial; alternate. Residue asparagine 427 is glycosylated (N-linked (GlcNAc...) asparagine). A disulfide bridge links cysteine 465 with cysteine 477. The residue at position 474 (asparagine 474) is a Deamidated asparagine; partial. N-linked (GlcNAc...) asparagine glycosylation is present at asparagine 476.

This sequence belongs to the glycosyl hydrolase 13 family. In terms of assembly, monomer. Ca(2+) serves as cofactor. Chloride is required as a cofactor.

It localises to the secreted. It carries out the reaction Endohydrolysis of (1-&gt;4)-alpha-D-glucosidic linkages in polysaccharides containing three or more (1-&gt;4)-alpha-linked D-glucose units.. Its function is as follows. Calcium-binding enzyme that initiates starch digestion in the oral cavity. Catalyzes the hydrolysis of internal (1-&gt;4)-alpha-D-glucosidic bonds, yielding a mixture of maltose, isomaltose, small amounts of glucose as well as small linear and branched oligosaccharides called dextrins. This is Alpha-amylase 1A from Homo sapiens (Human).